The following is a 432-amino-acid chain: Transcription factor E2F1 (432 aa).

Disordered regions lie at residues 39–85 (DVGA…GRPP) and 98–126 (YLAGSSGPFRGRGRHPGKGVKSPGEKSRY). Residues 65–106 (ATPQAPRPAPSAPRPALGRPPVKRRLDLETDHQYLAGSSGPF) are cyclin A:CDK2 binding. The interaction with BIRC2/c-IAP1 stretch occupies residues 87–189 (KRRLDLETDH…KKSKNHIQWL (103 aa)). Residues 108 to 192 (GRGRHPGKGV…KNHIQWLGSR (85 aa)) mediate DNA binding. 3 positions are modified to N6-acetyllysine: Lys-115, Lys-118, and Lys-123. Residues 151 to 172 (LNWAAEVLKVQKRRIYDITNVL) are leucine-zipper. The DEF box signature appears at 156-192 (EVLKVQKRRIYDITNVLEGIQLIAKKSKNHIQWLGSR). The residue at position 183 (Lys-183) is an N6-methyllysine; by SETD7. Residues 190–377 (GSRTMVGIGQ…RLSPLVAADS (188 aa)) are required for interaction with TRIM28. The interval 193 to 282 (TMVGIGQRLE…AVDSAETFQI (90 aa)) is dimerization. Residues 297–342 (PEESAEGISPGRTSYQETSGEDRNADSGTAGPPPSPPSTSPTLDPS) are disordered. Positions 363 to 432 (PMEEDRLSPL…DFGDLTPLDF (70 aa)) are transactivation. Phosphoserine occurs at positions 370 and 398. The RB1 binding stretch occupies residues 404–421 (VDYHFGLEEGEGIRDLFD). At Thr-428 the chain carries Phosphothreonine.

Belongs to the E2F/DP family. Component of the DRTF1/E2F transcription factor complex. Forms heterodimers with DP family members. The E2F1 complex binds specifically hypophosphorylated RB1, the interaction represses E2F1-driven transcription. During the cell cycle, RB1 becomes phosphorylated in mid-to-late G1 phase, detaches from the DRTF1/E2F complex, rendering E2F transcriptionally active. Interacts with TRRAP, which probably mediates its interaction with histone acetyltransferase complexes, leading to transcription activation. Binds TOPBP1 and EAPP. Interacts with ARID3A. Interacts with TRIM28; the interaction inhibits E2F1 acetylation through recruiting HDAC1 and represses its transcriptional activity. Interaction with KAT2B; the interaction acetylates E2F1 enhancing its DNA-binding and transcriptional activity. Interacts with BIRC2/c-IAP1 (via BIR domains). The complex TFDP1:E2F1 interacts with CEBPA; the interaction prevents CEBPA binding to target genes promoters and represses its transcriptional activity. Interacts with RRP1B. Interacts with HCFC1. Interacts with KMT2E; the interaction is probably indirect and is mediated via HCFC1. Interacts with DCAF5 and L3MBTL3; the interaction requires methylation at Lys-183 and is necessary to target E2F1 for ubiquitination by the CRL4-DCAF5 E3 ubiquitin ligase complex. Phosphorylated by CDK2 and cyclin A-CDK2 in the S-phase. Phosphorylation by CHEK2 stabilizes E2F1 upon DNA damage and regulates its effect on transcription and apoptosis. Phosphorylation at Ser-398 by GSK3B promotes interaction with USP11, leading to its deubiquitination and stabilization. In terms of processing, ubiquitinated via 'Lys-63'-linked ubiquitin, leading to its degradation. Deubiquitinated by USP11 following phosphorylation by GSK3B, promoting its stability. Post-translationally, acetylation stimulates DNA-binding. Enhanced under stress conditions such as DNA damage and inhibited by retinoblastoma protein RB1. Regulated by KAP1/TRIM28 which recruits HDAC1 to E2F1 resulting in deacetylation. Methylation at Lys-183 by SETD7 promotes E2F1 ubiquitin-dependent proteasomal degradation.

The protein localises to the nucleus. With respect to regulation, BIRC2/c-IAP1 stimulates its transcriptional activity. Functionally, transcription activator that binds DNA cooperatively with DP proteins through the E2 recognition site, 5'-TTTC[CG]CGC-3' found in the promoter region of a number of genes whose products are involved in cell cycle regulation or in DNA replication. The DRTF1/E2F complex functions in the control of cell-cycle progression from G1 to S phase. E2F1 binds preferentially RB1 in a cell-cycle dependent manner. It can mediate both cell proliferation and TP53/p53-dependent apoptosis. Blocks adipocyte differentiation by binding to specific promoters repressing CEBPA binding to its target gene promoters. Directly activates transcription of PEG10. Positively regulates transcription of RRP1B. This chain is Transcription factor E2F1, found in Rattus norvegicus (Rat).